The sequence spans 249 residues: Exosome complex component Rrp41 (249 aa).

The protein belongs to the RNase PH family. Rrp41 subfamily. In terms of assembly, component of the archaeal exosome complex. Forms a hexameric ring-like arrangement composed of 3 Rrp41-Rrp42 heterodimers. The hexameric ring associates with a trimer of Rrp4 and/or Csl4 subunits.

It is found in the cytoplasm. Functionally, catalytic component of the exosome, which is a complex involved in RNA degradation. Has 3'-&gt;5' exoribonuclease activity. Can also synthesize heteromeric RNA-tails. The polypeptide is Exosome complex component Rrp41 (Thermococcus gammatolerans (strain DSM 15229 / JCM 11827 / EJ3)).